Here is a 260-residue protein sequence, read N- to C-terminus: DNA repair protein RecO (260 aa).

Positions Ser-239 to Gln-260 are disordered.

The protein belongs to the RecO family.

Involved in DNA repair and RecF pathway recombination. The polypeptide is DNA repair protein RecO (Sodalis glossinidius (strain morsitans)).